Here is a 239-residue protein sequence, read N- to C-terminus: UDP-2,3-diacylglucosamine hydrolase (239 aa).

Mn(2+) contacts are provided by D9, H11, D42, N80, and H115. A substrate-binding site is contributed by 80-81 (NR). Substrate is bound by residues D123, S161, K165, K168, and H196. Mn(2+) is bound by residues H196 and H198.

Belongs to the LpxH family. Mn(2+) serves as cofactor.

It is found in the cell inner membrane. It carries out the reaction UDP-2-N,3-O-bis[(3R)-3-hydroxytetradecanoyl]-alpha-D-glucosamine + H2O = 2-N,3-O-bis[(3R)-3-hydroxytetradecanoyl]-alpha-D-glucosaminyl 1-phosphate + UMP + 2 H(+). The protein operates within glycolipid biosynthesis; lipid IV(A) biosynthesis; lipid IV(A) from (3R)-3-hydroxytetradecanoyl-[acyl-carrier-protein] and UDP-N-acetyl-alpha-D-glucosamine: step 4/6. Functionally, hydrolyzes the pyrophosphate bond of UDP-2,3-diacylglucosamine to yield 2,3-diacylglucosamine 1-phosphate (lipid X) and UMP by catalyzing the attack of water at the alpha-P atom. Involved in the biosynthesis of lipid A, a phosphorylated glycolipid that anchors the lipopolysaccharide to the outer membrane of the cell. This Pasteurella multocida (strain Pm70) protein is UDP-2,3-diacylglucosamine hydrolase.